Reading from the N-terminus, the 1083-residue chain is Ubiquitin-protein ligase E3C (1083 aa).

Basic and acidic residues-rich tracts occupy residues 1 to 10 (MFSFEGDFKT) and 20 to 40 (SRKE…RKRE). Residues 1–40 (MFSFEGDFKTRPKVSLGGASRKEEKASLLHRTQEERRKRE) are disordered. The segment at 1-60 (MFSFEGDFKTRPKVSLGGASRKEEKASLLHRTQEERRKREEERRRLKNAVIIQSFIRGYR) is cis-determinant of acceptor ubiquitin-binding. The IQ domain occupies 45–74 (RLKNAVIIQSFIRGYRDRKQQYFIQRSAFD). Residues 354–386 (ASPTGTGCPDSTSDSEDDNEETDQPNSPEDGRV) are disordered. Residues 366-376 (SDSEDDNEETD) show a composition bias toward acidic residues. The HECT domain occupies 744–1083 (NEPDLKKRIR…IECAAGFELS (340 aa)). A Glycyl lysine isopeptide (Lys-Gly) (interchain with G-Cter in ubiquitin); by autocatalysis cross-link involves residue lysine 903. The Glycyl thioester intermediate role is filled by cysteine 1051.

The protein belongs to the UBE3C family. In terms of assembly, interacts with 26S proteasomes. Interacts (via the HECT domain) with UBE2D1 and, less efficiently, with UBE2L3. Post-translationally, autoubiquitinated; promoting its own degradation.

The catalysed reaction is S-ubiquitinyl-[E2 ubiquitin-conjugating enzyme]-L-cysteine + [acceptor protein]-L-lysine = [E2 ubiquitin-conjugating enzyme]-L-cysteine + N(6)-ubiquitinyl-[acceptor protein]-L-lysine.. It participates in protein modification; protein ubiquitination. In terms of biological role, E3 ubiquitin-protein ligase that specifically catalyzes 'Lys-29'- and 'Lys-48'-linked polyubiquitin chains. Accepts ubiquitin from the E2 ubiquitin-conjugating enzyme UBE2D1 in the form of a thioester and then directly transfers the ubiquitin to targeted substrates. Associates with the proteasome and promotes elongation of ubiquitin chains on substrates bound to the 26S proteasome. Also catalyzes 'Lys-29'- and 'Lys-48'-linked ubiquitination of 26S proteasome subunit ADRM1/RPN13 in response to proteotoxic stress, impairing the ability of the proteasome to bind and degrade ubiquitin-conjugated proteins. Acts as a negative regulator of autophagy by mediating 'Lys-29'- and 'Lys-48'-linked ubiquitination of PIK3C3/VPS34, promoting its degradation. Can assemble unanchored poly-ubiquitin chains in either 'Lys-29'- or 'Lys-48'-linked polyubiquitin chains; with some preference for 'Lys-48' linkages. Acts as a negative regulator of type I interferon by mediating 'Lys-48'-linked ubiquitination of IRF3 and IRF7, leading to their degradation by the proteasome. Catalyzes ubiquitination and degradation of CAND2. This Mus musculus (Mouse) protein is Ubiquitin-protein ligase E3C.